We begin with the raw amino-acid sequence, 222 residues long: UPF0173 metal-dependent hydrolase Kcr_0055 (222 aa).

Belongs to the UPF0173 family.

This Korarchaeum cryptofilum (strain OPF8) protein is UPF0173 metal-dependent hydrolase Kcr_0055.